Reading from the N-terminus, the 304-residue chain is Acetylglutamate kinase (304 aa).

Residues 72–73, arginine 94, and asparagine 199 contribute to the substrate site; that span reads GG.

The protein belongs to the acetylglutamate kinase family. ArgB subfamily.

It is found in the cytoplasm. It carries out the reaction N-acetyl-L-glutamate + ATP = N-acetyl-L-glutamyl 5-phosphate + ADP. It participates in amino-acid biosynthesis; L-arginine biosynthesis; N(2)-acetyl-L-ornithine from L-glutamate: step 2/4. Catalyzes the ATP-dependent phosphorylation of N-acetyl-L-glutamate. In Methylobacterium nodulans (strain LMG 21967 / CNCM I-2342 / ORS 2060), this protein is Acetylglutamate kinase.